The following is a 77-amino-acid chain: VpAmp2.0 (77 aa).

The signal sequence occupies residues 1–23 (MQLRKALLVIFVAYLLVTDEAEA). The propeptide occupies 49–77 (RKREIEDLFDPYQKDLDLQRLDRFFSQFQ).

The protein belongs to the non-disulfide-bridged peptide (NDBP) superfamily. Medium-length antimicrobial peptide (group 3) family. As to expression, expressed by the venom gland.

Its subcellular location is the secreted. It is found in the target cell membrane. In terms of biological role, antimicrobial peptide with potent activity against Gram-positive bacteria S.aureus (MIC=10 uM) and S.agalactiaea (MIC=15 uM), and Gram-negative bacteria E.coli (MIC=24 uM) and P.aeruginosa (MIC=15 uM), as well as against yeasts Candida albicans (MIC=3.1 uM) and C.glabrata (MIC=25 uM). Also elicits low hemolysis on human erythrocytes (HC(50)=167 uM). This chain is VpAmp2.0, found in Mesomexovis punctatus (Scorpion).